Consider the following 37-residue polypeptide: Large ribosomal subunit protein bL12 (37 aa).

Belongs to the bacterial ribosomal protein bL12 family. Homodimer. Part of the ribosomal stalk of the 50S ribosomal subunit. Forms a multimeric L10(L12)X complex, where L10 forms an elongated spine to which 2 to 4 L12 dimers bind in a sequential fashion. Binds GTP-bound translation factors.

Functionally, forms part of the ribosomal stalk which helps the ribosome interact with GTP-bound translation factors. Is thus essential for accurate translation. This chain is Large ribosomal subunit protein bL12 (rplL), found in Clostridium pasteurianum.